Consider the following 251-residue polypeptide: MTKKKLIAGNWKMNGTLGANAALLQALRGGLEAGAYQNVDVAVAVPAAYLAQVQGLVEGSAIALAAQDVSRHEAGAYTGEVSAAMLQEFGVRYVLVGHSERRQYHGETDEQVAEKAQRALAAGITPVVCVGETLAEREAGQTEAVVKRQLAAVIHLNGHCISETVVAYEPVWAIGTGRTATPEQAQQVHAVLRAQLAAASEHADRIRLLYGGSMNAANAAALLAQPDIDGGLVGGASLKAQDFLQIIAAAA.

10–12 (NWK) serves as a coordination point for substrate. The active-site Electrophile is His-98. Glu-169 functions as the Proton acceptor in the catalytic mechanism. Substrate is bound by residues Gly-175, Ser-213, and 234–235 (GG).

The protein belongs to the triosephosphate isomerase family. In terms of assembly, homodimer.

It is found in the cytoplasm. The catalysed reaction is D-glyceraldehyde 3-phosphate = dihydroxyacetone phosphate. The protein operates within carbohydrate biosynthesis; gluconeogenesis. It functions in the pathway carbohydrate degradation; glycolysis; D-glyceraldehyde 3-phosphate from glycerone phosphate: step 1/1. Its function is as follows. Involved in the gluconeogenesis. Catalyzes stereospecifically the conversion of dihydroxyacetone phosphate (DHAP) to D-glyceraldehyde-3-phosphate (G3P). This Paracidovorax citrulli (strain AAC00-1) (Acidovorax citrulli) protein is Triosephosphate isomerase.